The chain runs to 342 residues: Holliday junction branch migration complex subunit RuvB (342 aa).

The segment at 1–185 (MTVKPLRDVT…FPIQERLEYY (185 aa)) is large ATPase domain (RuvB-L). ATP-binding positions include leucine 24, arginine 25, glycine 66, lysine 69, threonine 70, serine 71, 132-134 (EDY), arginine 175, tyrosine 185, and arginine 222. Threonine 70 is a Mg(2+) binding site. The tract at residues 186-256 (GPAELKEIAV…VVDRTLRRLE (71 aa)) is small ATPAse domain (RuvB-S). The head domain (RuvB-H) stretch occupies residues 259-342 (ARGLDAMDRR…RSGGKQGSLV (84 aa)). DNA contacts are provided by arginine 314 and arginine 319.

Belongs to the RuvB family. As to quaternary structure, homohexamer. Forms an RuvA(8)-RuvB(12)-Holliday junction (HJ) complex. HJ DNA is sandwiched between 2 RuvA tetramers; dsDNA enters through RuvA and exits via RuvB. An RuvB hexamer assembles on each DNA strand where it exits the tetramer. Each RuvB hexamer is contacted by two RuvA subunits (via domain III) on 2 adjacent RuvB subunits; this complex drives branch migration. In the full resolvosome a probable DNA-RuvA(4)-RuvB(12)-RuvC(2) complex forms which resolves the HJ.

The protein resides in the cytoplasm. It carries out the reaction ATP + H2O = ADP + phosphate + H(+). Its function is as follows. The RuvA-RuvB-RuvC complex processes Holliday junction (HJ) DNA during genetic recombination and DNA repair, while the RuvA-RuvB complex plays an important role in the rescue of blocked DNA replication forks via replication fork reversal (RFR). RuvA specifically binds to HJ cruciform DNA, conferring on it an open structure. The RuvB hexamer acts as an ATP-dependent pump, pulling dsDNA into and through the RuvAB complex. RuvB forms 2 homohexamers on either side of HJ DNA bound by 1 or 2 RuvA tetramers; 4 subunits per hexamer contact DNA at a time. Coordinated motions by a converter formed by DNA-disengaged RuvB subunits stimulates ATP hydrolysis and nucleotide exchange. Immobilization of the converter enables RuvB to convert the ATP-contained energy into a lever motion, pulling 2 nucleotides of DNA out of the RuvA tetramer per ATP hydrolyzed, thus driving DNA branch migration. The RuvB motors rotate together with the DNA substrate, which together with the progressing nucleotide cycle form the mechanistic basis for DNA recombination by continuous HJ branch migration. Branch migration allows RuvC to scan DNA until it finds its consensus sequence, where it cleaves and resolves cruciform DNA. The sequence is that of Holliday junction branch migration complex subunit RuvB from Anaeromyxobacter dehalogenans (strain 2CP-C).